A 2172-amino-acid chain; its full sequence is Non-reducing polyketide synthase dpfgA (2172 aa).

The interval 74-181 (EWIKCGNSSL…LALCVGALVD (108 aa)) is N-terminal acylcarrier protein transacylase domain (SAT). A Ketosynthase family 3 (KS3) domain is found at 389-783 (DDSIAIIGVS…GTNAAMLVCQ (395 aa)). Active-site for beta-ketoacyl synthase activity residues include cysteine 529, histidine 665, and histidine 706. A malonyl-CoA:ACP transacylase (MAT) domain region spans residues 895-1197 (VFAGQTGRQA…SFHSILLQGQ (303 aa)). Residue serine 981 is the For acyl/malonyl transferase activity of the active site. Positions 1270–1403 (PELVSLAGPT…GTINWQGQGC (134 aa)) are N-terminal hotdog fold. The PKS/mFAS DH domain occupies 1270 to 1581 (PELVSLAGPT…LKRIPIRSLQ (312 aa)). The tract at residues 1277-1575 (GPTDGETVEF…EIIGASLKRI (299 aa)) is product template (PT) domain. Residues 1428–1581 (SASTVQGLFV…LKRIPIRSLQ (154 aa)) form a C-terminal hotdog fold region. Disordered regions lie at residues 1608 to 1631 (DSDS…HADF) and 1650 to 1672 (YPMD…VLSD). A compositionally biased stretch (low complexity) spans 1650–1668 (YPMDSSSFSSAQPPSSASS). Positions 1671 to 1747 (SDHDQESTAL…DLYRMVLNHD (77 aa)) constitute a Carrier domain. O-(pantetheine 4'-phosphoryl)serine is present on serine 1707. The interval 1751-1773 (DRGSTVLSDKAPKSKSDSSLHGQ) is disordered. Residues 1975-2155 (EFLHRVLSRL…DAGFIHVDWT (181 aa)) form a methyltransferase (CMeT) domain region.

Its pathway is secondary metabolite biosynthesis; terpenoid biosynthesis. Non-reducing polyketide synthase; part of the gene cluster that mediates the biosynthesis of diterpenoid pyrones. The first step of the pathway is the synthesis of the alpha-pyrone moiety by the polyketide synthase dpfgA via condensation of one acetyl-CoA starter unit with 3 malonyl-CoA units and 2 methylations. The alpha-pyrone is then combined with geranylgeranyl pyrophosphate (GGPP) formed by the GGPP synthase dpfgD through the action of the prenyltransferase dpfgC to yield a linear alpha-pyrone diterpenoid. Subsequent steps in the diterpenoid pyrone biosynthetic pathway involve the decalin core formation, which is initiated by the epoxidation of the C10-C11 olefin by the FAD-dependent oxidoreductase dpfgE, and is followed by a cyclization cascade catalyzed by the terpene cyclase dpfgB. The short chain dehydrogenase/reductase dpfgG then oxidizes the 8S hydroxy group to a ketone and the short chain dehydrogenase/reductase dpfgH reduces the ketone to the 8R hydroxy group to yield higginsianin B. Higginsianin B is further methylated by the methyltransferase dpfgI to produce the intermediate named FDDP B. The cytochrome P450 monooxygenase dfgpJ then catalyzes a three-step oxidation at C-27 to generate a carboxylic acid as well as C-26 hydroxylation. Finally, methyltransferase dpfgK methylates the carboxylic acid generated by dpfgJ, yielding the final diterpenoid pyrones from the pathway which were named FDDP D and FDDP E. This is Non-reducing polyketide synthase dpfgA from Gibberella zeae (strain ATCC MYA-4620 / CBS 123657 / FGSC 9075 / NRRL 31084 / PH-1) (Wheat head blight fungus).